Reading from the N-terminus, the 389-residue chain is POU domain, class 5, transcription factor 3 (389 aa).

Low complexity-rich tracts occupy residues 1-18 (MFSPDGGLPAAPFGLLPD) and 145-165 (LANLGSSGSSSGAASEGGHSS). Disordered regions lie at residues 1-88 (MFSP…APPA) and 145-177 (LANLGSSGSSSGAASEGGHSSDSGDEDAPTSEE). Acidic residues predominate over residues 167-177 (SGDEDAPTSEE). In terms of domain architecture, POU-specific spans 170-244 (EDAPTSEELE…LLQRWLNEAE (75 aa)). Positions 264–323 (KRKRRTSIETNVKGTLESFFRKCVKPSPQEISQIAEDLNLDKDVVRVWFCNRRQKGKRLL) form a DNA-binding region, homeobox.

Belongs to the POU transcription factor family.

Its subcellular location is the nucleus. Required for the maintenance of pluripotency and self-renewal of embryonic stem cells. Transcriptional activator that binds the DNA consensus sequence 5'-ATGCAAAT-3'. This Gallus gallus (Chicken) protein is POU domain, class 5, transcription factor 3 (POU5F3).